The chain runs to 287 residues: Syntaxin-11 (287 aa).

Residues 41 to 71 (LESLYRVIQDIQDENQLLLIDVRRLGRQNVR) adopt a coiled-coil conformation. The 63-residue stretch at 204–266 (LNEIESRHRE…GEAKAQVRKA (63 aa)) folds into the t-SNARE coiled-coil homology domain.

Belongs to the syntaxin family. As to quaternary structure, interacts with the SNARE proteins SNAP-23 and VAMP.

Its subcellular location is the membrane. The protein localises to the golgi apparatus. It is found in the trans-Golgi network membrane. SNARE that acts to regulate protein transport between late endosomes and the trans-Golgi network. This chain is Syntaxin-11 (Stx11), found in Mus musculus (Mouse).